The following is a 391-amino-acid chain: Histidinol-phosphate aminotransferase (391 aa).

Residue lysine 245 is modified to N6-(pyridoxal phosphate)lysine.

The protein belongs to the class-II pyridoxal-phosphate-dependent aminotransferase family. Histidinol-phosphate aminotransferase subfamily. Homodimer. It depends on pyridoxal 5'-phosphate as a cofactor.

The enzyme catalyses L-histidinol phosphate + 2-oxoglutarate = 3-(imidazol-4-yl)-2-oxopropyl phosphate + L-glutamate. It functions in the pathway amino-acid biosynthesis; L-histidine biosynthesis; L-histidine from 5-phospho-alpha-D-ribose 1-diphosphate: step 7/9. In Bifidobacterium adolescentis (strain ATCC 15703 / DSM 20083 / NCTC 11814 / E194a), this protein is Histidinol-phosphate aminotransferase.